Consider the following 484-residue polypeptide: Putative cysteine ligase BshC (484 aa).

Positions 372-435 (RAFRDRVEGL…AARDEVLARH (64 aa)) form a coiled coil.

It belongs to the BshC family.

This Thermus thermophilus (strain ATCC BAA-163 / DSM 7039 / HB27) protein is Putative cysteine ligase BshC.